A 316-amino-acid chain; its full sequence is UDP-N-acetylenolpyruvoylglucosamine reductase (316 aa).

In terms of domain architecture, FAD-binding PCMH-type spans 30–194 (VGGEADYLVF…LSVKFALAPG (165 aa)). Arg173 is an active-site residue. Ser223 acts as the Proton donor in catalysis. Residue Glu293 is part of the active site.

The protein belongs to the MurB family. Requires FAD as cofactor.

The protein localises to the cytoplasm. The catalysed reaction is UDP-N-acetyl-alpha-D-muramate + NADP(+) = UDP-N-acetyl-3-O-(1-carboxyvinyl)-alpha-D-glucosamine + NADPH + H(+). It participates in cell wall biogenesis; peptidoglycan biosynthesis. In terms of biological role, cell wall formation. The chain is UDP-N-acetylenolpyruvoylglucosamine reductase from Streptococcus pneumoniae serotype 19F (strain G54).